Here is a 278-residue protein sequence, read N- to C-terminus: MDKSGIDSLDHVTSDAVELANRSDNSSDSSLFKTQCIPYSPKGEKRNPIRKFVRTPESVHASDSSSDSSFEPIPLTIKAIFERFKNRKKRYKKKKKRRYQPTGRPRGRPEGRRNPIYSLIDKKKQFRSRGSGFPFLESENEKNAPWRKILTFEQAVARGFFNYIEKLKYEHHLKESLKQMNVGEDLENEDFDSRRYKFLDDDGSISPIEESTAEDEDATHLEDNECDIKLAGDSFIVSSEFPVRLSVYLEEEDITEEAALSKKRATKAKNTGQRGLKM.

Disordered regions lie at residues 20 to 71 (ANRS…SSFE) and 88 to 116 (KKRY…RNPI). Residues 22–33 (RSDNSSDSSLFK) show a composition bias toward polar residues. Ser23 is modified (phosphoserine). A compositionally biased stretch (basic residues) spans 88 to 99 (KKRYKKKKKRRY). Phosphoserine is present on residues Ser138 and Ser234.

As to quaternary structure, component of the transcription factor SL1/TIF-IB complex, composed of TBP and at least TAF1A, TAF1B, TAF1C and TAF1D. Interacts with UBTF.

It localises to the nucleus. In terms of biological role, component of the transcription factor SL1/TIF-IB complex, which is involved in the assembly of the PIC (preinitiation complex) during RNA polymerase I-dependent transcription. The rate of PIC formation probably is primarily dependent on the rate of association of SL1/TIF-IB with the rDNA promoter. SL1/TIF-IB is involved in stabilization of nucleolar transcription factor 1/UBTF on rDNA. Formation of SL1/TIF-IB excludes the association of TBP with TFIID subunits. This is TATA box-binding protein-associated factor RNA polymerase I subunit D (TAF1D) from Homo sapiens (Human).